Consider the following 1430-residue polypeptide: FYVE, RhoGEF and PH domain-containing protein 6 (1430 aa).

Residues Met-1–Ile-36 are disordered. Over residues Lys-15–Lys-24 the composition is skewed to low complexity. At Ser-231 the chain carries Phosphoserine. The segment at Cys-330–Leu-351 is disordered. Positions Pro-334–Leu-351 are enriched in polar residues. Ser-515 bears the Phosphoserine mark. A disordered region spans residues Glu-516–Arg-538. Basic and acidic residues predominate over residues Ser-527–Arg-538. Phosphoserine is present on residues Ser-554, Ser-605, Ser-692, and Ser-721. 2 disordered regions span residues Asn-695–Ser-739 and Pro-800–Lys-869. A compositionally biased stretch (polar residues) spans Ser-728–Ser-739. The segment covering Pro-831 to Ser-847 has biased composition (acidic residues). Positions Ser-851–Met-868 are enriched in basic and acidic residues. Residues Lys-871–Thr-1060 enclose the DH domain. Positions Val-1089–Glu-1183 constitute a PH 1 domain. A Phosphoserine modification is found at Ser-1197. The segment at Asp-1222–Gln-1281 adopts an FYVE-type zinc-finger fold. The Zn(2+) site is built by Cys-1228, Cys-1231, Cys-1244, Cys-1247, Cys-1252, Cys-1255, Cys-1273, and Cys-1276. One can recognise a PH 2 domain in the interval Asp-1333–Ile-1429.

It is found in the cytoplasm. It localises to the cytoskeleton. Its function is as follows. May activate CDC42, a member of the Ras-like family of Rho- and Rac proteins, by exchanging bound GDP for free GTP. May play a role in regulating the actin cytoskeleton and cell shape. This is FYVE, RhoGEF and PH domain-containing protein 6 (FGD6) from Homo sapiens (Human).